The chain runs to 230 residues: GDT1-like protein 4 (230 aa).

Helical transmembrane passes span 12–32 (LAMT…AILA), 39–59 (LVLA…ATLG), 71–91 (THHI…WDGF), 135–155 (AFLT…NFFG), 175–195 (FGVV…AVIG), and 207–227 (IVAL…YLTS).

Belongs to the GDT1 family.

The protein localises to the membrane. This chain is GDT1-like protein 4, found in Arabidopsis thaliana (Mouse-ear cress).